The chain runs to 234 residues: 3,4-dihydroxy-2-butanone 4-phosphate synthase (234 aa).

D-ribulose 5-phosphate-binding positions include 39–40 (RE), Asp-44, 152–156 (RRGHT), and Glu-176. A Mg(2+)-binding site is contributed by Glu-40. His-155 lines the Mg(2+) pocket.

The protein belongs to the DHBP synthase family. As to quaternary structure, homodimer. Mg(2+) is required as a cofactor. Mn(2+) serves as cofactor.

The enzyme catalyses D-ribulose 5-phosphate = (2S)-2-hydroxy-3-oxobutyl phosphate + formate + H(+). It functions in the pathway cofactor biosynthesis; riboflavin biosynthesis; 2-hydroxy-3-oxobutyl phosphate from D-ribulose 5-phosphate: step 1/1. Functionally, catalyzes the conversion of D-ribulose 5-phosphate to formate and 3,4-dihydroxy-2-butanone 4-phosphate. The sequence is that of 3,4-dihydroxy-2-butanone 4-phosphate synthase from Pelobacter propionicus (strain DSM 2379 / NBRC 103807 / OttBd1).